A 433-amino-acid chain; its full sequence is E3 ubiquitin-protein ligase RGLG5 (433 aa).

A disordered region spans residues 1–61 (MGGSSSKESP…SYNSGRQTPK (61 aa)). Residue glycine 2 is the site of N-myristoyl glycine attachment. Low complexity predominate over residues 22 to 39 (SVSGSSSYSSAWDQSSYY). Residues 40-61 (QTPNHPSASPVSSYNSGRQTPK) are compositionally biased toward polar residues. The region spanning 93-313 (NLIVGIDVTK…KEAEFALSAL (221 aa)) is the VWFA domain. The tract at residues 340 to 383 (IALPPPTYATQSMRNSPRTSRSTSFQNKPYDNGVSSTPPSTTHN) is disordered. Residues 347 to 383 (YATQSMRNSPRTSRSTSFQNKPYDNGVSSTPPSTTHN) show a composition bias toward polar residues. The RING-type zinc finger occupies 390 to 423 (CPVCLVSAKNMAFNCGHQTCAGCGEDLHVCPICR).

Interacts with PP2CA. N-myristoylated.

The protein localises to the cell membrane. It carries out the reaction S-ubiquitinyl-[E2 ubiquitin-conjugating enzyme]-L-cysteine + [acceptor protein]-L-lysine = [E2 ubiquitin-conjugating enzyme]-L-cysteine + N(6)-ubiquitinyl-[acceptor protein]-L-lysine.. Together with RGLG1, mediates the ubiquitination and subsequent proteasomal degradation of the target protein PP2CA. Functions as a positive regulator of abscisic acid (ABA) signaling through ABA-dependent degradation of PP2CA, a major inhibitor of ABA signaling. This chain is E3 ubiquitin-protein ligase RGLG5, found in Arabidopsis thaliana (Mouse-ear cress).